The sequence spans 388 residues: Zinc finger protein ubi-d4 A (388 aa).

The tract at residues 60 to 190 is disordered; that stretch reads GPGSAPGQLY…AKGKGIGSAR (131 aa). Composition is skewed to basic and acidic residues over residues 97–107 and 123–137; these read PDPEQMLKKEG and DPIE…RDDD. A compositionally biased stretch (acidic residues) spans 156–170; the sequence is PDDFLDDLDDEDYEE. The C2H2-type zinc-finger motif lies at 205-228; it reads YACDICGKRYKNRPGLSYHYAHSH. The tract at residues 233–264 is disordered; the sequence is EGAGAEDKEDSQPPTPIMHRPEEQKSKKGPDG. A compositionally biased stretch (basic and acidic residues) spans 251-262; sequence HRPEEQKSKKGP. 2 consecutive PHD-type zinc fingers follow at residues 269–329 and 326–376; these read NNYC…CKCC and CKCC…CLDL.

It belongs to the requiem/DPF family.

The protein localises to the cytoplasm. It is found in the nucleus. In terms of biological role, may be a transcription factor required for the apoptosis response following survival factor withdrawal from myeloid cells. Might also have a role in the development and maturation of lymphoid cells. The chain is Zinc finger protein ubi-d4 A (req-a) from Xenopus laevis (African clawed frog).